Reading from the N-terminus, the 692-residue chain is MLSSITVRTKSGRLIPLVLAATLLAACSGRVSTTPPAPVQSEATASADYYLQQMQQSSDDSKADWQLLAIRALLREGKLPQAADLLGQLPSQLSEAQQLEQRLVSAELEIARHAPQQAQAILTKLDVAQLSQAQQLRYYQAVIAAAQGKTTLAQIRAYIALQPLLTQEKQRKANIDATWAALSTLTPADLNGMVINANEDILRGWLDLLRLYQDNRQDPALLKAAIKDWQTRYPNNPAATLLPSALDNILHLQSASTASIALLLPLNGQAKVFSDAIEAGFNAAKNGAFSQNSAPTAAAATDNGAPASSGTLAAATTPSAPADVNAAGAVSPSAQGTDAAAPAAPNDSAALPPLDAAGDPIAPSVSPGNPDAHIQVYDTSSQPLPALLSQAQQAGASLVVGPLLKNNVDQLNTLSTPLNILALNQPEQVQNHPNICYFALSPEDEARDAARHIWAQGKRTPLLLIPRSPLGDRVAKAFATEWQSLGGGSVLQQTFGSSAELRSTINGGTGIRLTGQPVSIAPAQPASVTIAGLTIPAPVQPPVASGGGVDAVYIIATPAEITLIKPMIDLANGTHNGIGLYASSRSYQAGAGPDFRLEMEGVQFSDIPLLAGSDPAILQQAPAQYRNDYSLMRLYAMGADAWTLANHFAQLRQIPGFQVQGATGTLSANDNCVIQRKLPWLQYQKGSIVPVQ.

Positions 1-26 (MLSSITVRTKSGRLIPLVLAATLLAA) are cleaved as a signal peptide. A lipid anchor (N-palmitoyl cysteine) is attached at Cys-27. Residue Cys-27 is the site of S-diacylglycerol cysteine attachment. Disordered regions lie at residues 297–316 (AAAA…AAAT) and 324–373 (VNAA…PDAH). The span at 332-363 (PSAQGTDAAAPAAPNDSAALPPLDAAGDPIAP) shows a compositional bias: low complexity.

It belongs to the LpoA family. Interacts with PBP1a.

The protein localises to the cell outer membrane. Functionally, regulator of peptidoglycan synthesis that is essential for the function of penicillin-binding protein 1A (PBP1a). The protein is Penicillin-binding protein activator LpoA of Edwardsiella piscicida.